The chain runs to 880 residues: Probable LRR receptor-like serine/threonine-protein kinase At2g28960 (880 aa).

The N-terminal stretch at 1–24 is a signal peptide; the sequence is MEGRRQRLLVFIFGALAITHLVQA. The Extracellular portion of the chain corresponds to 25 to 511; it reads QPPDQRGFIS…NNNNQTYIVP (487 aa). Asn180, Asn201, Asn228, Asn254, Asn287, Asn403, Asn430, and Asn441 each carry an N-linked (GlcNAc...) asparagine glycan. LRR repeat units lie at residues 409–430, 433–455, and 457–476; these read RIIS…AFQN, ELRK…LASM, and SLSI…PKLL. N-linked (GlcNAc...) asparagine glycosylation occurs at Asn505. The helical transmembrane segment at 512 to 532 threads the bilayer; sequence VVASVASVLIIIAVLILILVF. Topologically, residues 533-880 are cytoplasmic; it reads KKRRPTQVDS…FTTEINPKAR (348 aa). Phosphothreonine is present on Thr564. In terms of domain architecture, Protein kinase spans 573–846; the sequence is DNFERVLGEG…QVTNELKQCL (274 aa). Residues 579–587 and Lys601 contribute to the ATP site; that span reads LGEGGFGVV. At Tyr646 the chain carries Phosphotyrosine. Asp698 (proton acceptor) is an active-site residue. Ser732 bears the Phosphoserine mark. Residues Thr733 and Thr738 each carry the phosphothreonine modification. A Phosphotyrosine modification is found at Tyr746. Residues 854 to 880 are disordered; that stretch reads GVREDMGSRSSVEMSTSFTTEINPKAR. Residues 861–880 are compositionally biased toward polar residues; it reads SRSSVEMSTSFTTEINPKAR.

The protein belongs to the protein kinase superfamily. Ser/Thr protein kinase family.

It is found in the membrane. It catalyses the reaction L-seryl-[protein] + ATP = O-phospho-L-seryl-[protein] + ADP + H(+). It carries out the reaction L-threonyl-[protein] + ATP = O-phospho-L-threonyl-[protein] + ADP + H(+). The polypeptide is Probable LRR receptor-like serine/threonine-protein kinase At2g28960 (Arabidopsis thaliana (Mouse-ear cress)).